Reading from the N-terminus, the 252-residue chain is MNILLTNDDGIEAEGINTLAELLSKYHNVTMVAPENQRSASSHSITIYEPIIVKQVKKPYNIEAYSISGTPADCVRVALDKLVPDNIDMVISGINKGLNIGNDILYSGTVSAAIEGAMYKVPSMAVSAQFIKNKKENYKIAAKYALGMLNRLKKEDLKNDVVLNLNIPFCSEEEIKGIKVCKVGNKIFNTRFSEEIDEEGNKVLKLEGDINKDIYEGTDVYYIRNKYVTLTPLHYDLTNFNILEETEQLFLS.

A divalent metal cation contacts are provided by aspartate 8, aspartate 9, serine 39, and asparagine 95.

It belongs to the SurE nucleotidase family. A divalent metal cation is required as a cofactor.

Its subcellular location is the cytoplasm. It catalyses the reaction a ribonucleoside 5'-phosphate + H2O = a ribonucleoside + phosphate. Functionally, nucleotidase that shows phosphatase activity on nucleoside 5'-monophosphates. The polypeptide is 5'-nucleotidase SurE (Clostridium botulinum (strain Okra / Type B1)).